A 129-amino-acid chain; its full sequence is Snaclec coagulation factor IX-binding protein subunit A (129 aa).

Positions 1–129 (DCPSGWSSYE…GQQNPFVCEA (129 aa)) constitute a C-type lectin domain. 3 cysteine pairs are disulfide-bonded: Cys-2–Cys-13, Cys-30–Cys-127, and Cys-102–Cys-119. Ca(2+) contacts are provided by Ser-41, Glu-43, and Glu-47. Residue Glu-128 participates in Ca(2+) binding.

The protein belongs to the snaclec family. As to quaternary structure, heterodimer of subunits A and B; disulfide-linked. In terms of tissue distribution, expressed by the venom gland.

It is found in the secreted. Anticoagulant protein which binds to the gamma-carboxyglutamic acid-domain regions of factor IX (F9) (but not factor X) in the presence of calcium with a 1 to 1 stoichiometry. In Protobothrops flavoviridis (Habu), this protein is Snaclec coagulation factor IX-binding protein subunit A.